The following is a 406-amino-acid chain: Putative sodium-coupled neutral amino acid transporter 11 (406 aa).

The Cytoplasmic portion of the chain corresponds to 1–7; sequence MKQAGFP. A helical transmembrane segment spans residues 8–28; the sequence is LGILLLFWVSYVTDFSLVLLI. Asparagine 44 carries N-linked (GlcNAc...) asparagine glycosylation. Transmembrane regions (helical) follow at residues 48-68, 93-113, 121-141, 156-176, 202-222, and 241-263; these read GFPG…IAMI, VFIG…LPLS, LGKV…IVMA, AWVF…FAFI, MSIV…YLTF, and VTFG…CFVT. Residue asparagine 275 is glycosylated (N-linked (GlcNAc...) asparagine). 3 helical membrane-spanning segments follow: residues 279–299, 301–321, and 340–360; these read VFHI…SLLI, CLGI…IFII, and IMSC…FVMA.

The protein belongs to the amino acid/polyamine transporter 2 family.

It localises to the membrane. Its function is as follows. Putative sodium-dependent amino acid/proton antiporter. The polypeptide is Putative sodium-coupled neutral amino acid transporter 11 (SLC38A11) (Homo sapiens (Human)).